Reading from the N-terminus, the 269-residue chain is Tryptophan synthase alpha chain (269 aa).

Active-site proton acceptor residues include E49 and D60.

Belongs to the TrpA family. Tetramer of two alpha and two beta chains.

It carries out the reaction (1S,2R)-1-C-(indol-3-yl)glycerol 3-phosphate + L-serine = D-glyceraldehyde 3-phosphate + L-tryptophan + H2O. It participates in amino-acid biosynthesis; L-tryptophan biosynthesis; L-tryptophan from chorismate: step 5/5. Functionally, the alpha subunit is responsible for the aldol cleavage of indoleglycerol phosphate to indole and glyceraldehyde 3-phosphate. The chain is Tryptophan synthase alpha chain from Pseudomonas putida (strain ATCC 700007 / DSM 6899 / JCM 31910 / BCRC 17059 / LMG 24140 / F1).